The chain runs to 385 residues: Probable dual-specificity RNA methyltransferase RlmN (385 aa).

The disordered stretch occupies residues 1-35; that stretch reads MNVKEPAEEAAIQLRTERQRIEPEGEEQSEQPTDL. The Proton acceptor role is filled by Glu-121. In terms of domain architecture, Radical SAM core spans 132 to 367; the sequence is TRDRVTVCLS…AVIREERGQD (236 aa). Residues Cys-139 and Cys-372 are joined by a disulfide bond. [4Fe-4S] cluster-binding residues include Cys-146, Cys-150, and Cys-153. Residues 198–199, Ser-230, 253–255, and Asn-329 contribute to the S-adenosyl-L-methionine site; these read GE and SLH. Cys-372 functions as the S-methylcysteine intermediate in the catalytic mechanism.

This sequence belongs to the radical SAM superfamily. RlmN family. [4Fe-4S] cluster is required as a cofactor.

The protein localises to the cytoplasm. The catalysed reaction is adenosine(2503) in 23S rRNA + 2 reduced [2Fe-2S]-[ferredoxin] + 2 S-adenosyl-L-methionine = 2-methyladenosine(2503) in 23S rRNA + 5'-deoxyadenosine + L-methionine + 2 oxidized [2Fe-2S]-[ferredoxin] + S-adenosyl-L-homocysteine. The enzyme catalyses adenosine(37) in tRNA + 2 reduced [2Fe-2S]-[ferredoxin] + 2 S-adenosyl-L-methionine = 2-methyladenosine(37) in tRNA + 5'-deoxyadenosine + L-methionine + 2 oxidized [2Fe-2S]-[ferredoxin] + S-adenosyl-L-homocysteine. Functionally, specifically methylates position 2 of adenine 2503 in 23S rRNA and position 2 of adenine 37 in tRNAs. This chain is Probable dual-specificity RNA methyltransferase RlmN, found in Heliobacterium modesticaldum (strain ATCC 51547 / Ice1).